We begin with the raw amino-acid sequence, 312 residues long: Olfactory receptor 2L3 (312 aa).

The Extracellular portion of the chain corresponds to 1–24 (MENYNQTSTDFILLGFFPPSRIGL). Asparagine 5 carries an N-linked (GlcNAc...) asparagine glycan. The chain crosses the membrane as a helical span at residues 25–48 (FLFILIVFIFLMALIGNLSMILLI). Topologically, residues 49 to 56 (FLDTHLHT) are cytoplasmic. The chain crosses the membrane as a helical span at residues 57-78 (PMYFLLSQLSLIDLNYISTIVP). At 79 to 99 (KMASDFLSGNKSISFTGCGIQ) the chain is on the extracellular side. A glycan (N-linked (GlcNAc...) asparagine) is linked at asparagine 88. The cysteines at positions 96 and 188 are disulfide-linked. Residues 100-119 (SFFFSALGGAEALLLASMAY) form a helical membrane-spanning segment. The Cytoplasmic segment spans residues 120 to 138 (DRYIAICFPLHYPIRMSKR). Residues 139 to 157 (MCVLMITGSWIIGSINACA) traverse the membrane as a helical segment. Residues 158 to 194 (HTVYVLHIPYCQSRAINHFFCDVPAMVTLACMDTWVY) lie on the Extracellular side of the membrane. A helical transmembrane segment spans residues 195–218 (EGTVFLSTTIFLVFPFIAISCSYG). Topologically, residues 219–235 (RVLLAVYHMKSAEGRKK) are cytoplasmic. The chain crosses the membrane as a helical span at residues 236-258 (AYLTCSTHLTVVTFYYAPFVYTY). Residues 259-271 (LRPRSLRSPTEDK) are Extracellular-facing. Residues 272–291 (VLAVFYTTLTPMLNPIIYSL) form a helical membrane-spanning segment. Residues 292–312 (RNKEVMGALTRVSQRICSGKM) are Cytoplasmic-facing.

It belongs to the G-protein coupled receptor 1 family.

It localises to the cell membrane. Odorant receptor. The protein is Olfactory receptor 2L3 (OR2L3) of Homo sapiens (Human).